Reading from the N-terminus, the 78-residue chain is Protein SlyX homolog (78 aa).

It belongs to the SlyX family.

This is Protein SlyX homolog from Xanthomonas campestris pv. campestris (strain 8004).